Reading from the N-terminus, the 257-residue chain is Ribonuclease HII (257 aa).

Residues Thr72–Lys257 enclose the RNase H type-2 domain. A divalent metal cation is bound by residues Asp78, Glu79, and Asp170.

This sequence belongs to the RNase HII family. Mn(2+) is required as a cofactor. Requires Mg(2+) as cofactor.

It is found in the cytoplasm. It catalyses the reaction Endonucleolytic cleavage to 5'-phosphomonoester.. Its function is as follows. Endonuclease that specifically degrades the RNA of RNA-DNA hybrids. The chain is Ribonuclease HII from Bacillus cereus (strain AH820).